The chain runs to 141 residues: Ribonuclease VapC16 (141 aa).

Residue Asp-99 participates in Mg(2+) binding. Residues 99 to 141 (DHAHTAHRRASGSPSTSIRPCAHRPGTAAWPDDHHRRRPVSCL) are disordered.

It belongs to the PINc/VapC protein family. Requires Mg(2+) as cofactor.

Functionally, toxic component of a type II toxin-antitoxin (TA) system. An RNase. The cognate antitoxin is VapB16. This is Ribonuclease VapC16 from Mycobacterium tuberculosis (strain ATCC 25618 / H37Rv).